A 159-amino-acid polypeptide reads, in one-letter code: 2-C-methyl-D-erythritol 2,4-cyclodiphosphate synthase (159 aa).

Residues aspartate 8 and histidine 10 each contribute to the a divalent metal cation site. 4-CDP-2-C-methyl-D-erythritol 2-phosphate-binding positions include aspartate 8 to histidine 10 and histidine 34 to serine 35. Position 42 (histidine 42) interacts with a divalent metal cation. 4-CDP-2-C-methyl-D-erythritol 2-phosphate-binding positions include aspartate 56–glycine 58, phenylalanine 61–aspartate 65, alanine 100–leucine 106, threonine 132–glutamate 135, phenylalanine 139, and arginine 142.

This sequence belongs to the IspF family. Homotrimer. A divalent metal cation serves as cofactor.

The enzyme catalyses 4-CDP-2-C-methyl-D-erythritol 2-phosphate = 2-C-methyl-D-erythritol 2,4-cyclic diphosphate + CMP. The protein operates within isoprenoid biosynthesis; isopentenyl diphosphate biosynthesis via DXP pathway; isopentenyl diphosphate from 1-deoxy-D-xylulose 5-phosphate: step 4/6. Functionally, involved in the biosynthesis of isopentenyl diphosphate (IPP) and dimethylallyl diphosphate (DMAPP), two major building blocks of isoprenoid compounds. Catalyzes the conversion of 4-diphosphocytidyl-2-C-methyl-D-erythritol 2-phosphate (CDP-ME2P) to 2-C-methyl-D-erythritol 2,4-cyclodiphosphate (ME-CPP) with a corresponding release of cytidine 5-monophosphate (CMP). The polypeptide is 2-C-methyl-D-erythritol 2,4-cyclodiphosphate synthase (Escherichia coli O81 (strain ED1a)).